The following is a 153-amino-acid chain: Protein SprT-like (153 aa).

Residues 6 to 148 (LQQLTEQLSL…CGKCGGKIKE (143 aa)) form the SprT-like domain. His67 is a Zn(2+) binding site. The active site involves Glu68. His71 is a binding site for Zn(2+).

It belongs to the SprT family. The cofactor is Zn(2+).

It is found in the cytoplasm. The protein is Protein SprT-like of Bacillus licheniformis (strain ATCC 14580 / DSM 13 / JCM 2505 / CCUG 7422 / NBRC 12200 / NCIMB 9375 / NCTC 10341 / NRRL NRS-1264 / Gibson 46).